We begin with the raw amino-acid sequence, 437 residues long: Enolase (437 aa).

Substrate is bound by residues His-160 and Glu-169. Glu-212 (proton donor) is an active-site residue. Residues Asp-247, Glu-296, and Asp-321 each coordinate Mg(2+). Substrate is bound by residues Glu-296 and Asp-321. Lys-346 acts as the Proton acceptor in catalysis. Substrate-binding positions include 373-376 (SHRS) and Lys-397.

Belongs to the enolase family. In terms of assembly, homodimer. Mg(2+) serves as cofactor.

The protein resides in the cytoplasm. It carries out the reaction (2R)-2-phosphoglycerate = phosphoenolpyruvate + H2O. It functions in the pathway carbohydrate degradation; glycolysis; pyruvate from D-glyceraldehyde 3-phosphate: step 4/5. This chain is Enolase (ENO), found in Eremothecium gossypii (strain ATCC 10895 / CBS 109.51 / FGSC 9923 / NRRL Y-1056) (Yeast).